The primary structure comprises 458 residues: ATP synthase subunit beta (458 aa).

148 to 155 (GGAGVGKT) contributes to the ATP binding site.

It belongs to the ATPase alpha/beta chains family. In terms of assembly, F-type ATPases have 2 components, CF(1) - the catalytic core - and CF(0) - the membrane proton channel. CF(1) has five subunits: alpha(3), beta(3), gamma(1), delta(1), epsilon(1). CF(0) has three main subunits: a(1), b(2) and c(9-12). The alpha and beta chains form an alternating ring which encloses part of the gamma chain. CF(1) is attached to CF(0) by a central stalk formed by the gamma and epsilon chains, while a peripheral stalk is formed by the delta and b chains.

It is found in the cell inner membrane. It catalyses the reaction ATP + H2O + 4 H(+)(in) = ADP + phosphate + 5 H(+)(out). In terms of biological role, produces ATP from ADP in the presence of a proton gradient across the membrane. The catalytic sites are hosted primarily by the beta subunits. The polypeptide is ATP synthase subunit beta (Pseudomonas fluorescens (strain Pf0-1)).